A 1111-amino-acid polypeptide reads, in one-letter code: uncharacterized protein (1111 aa).

A signal peptide spans 1–31; that stretch reads MIRKLMKIPPFFTALFASAMFTLSVSQGVLA. The next 11 membrane-spanning stretches (helical) occupy residues 490–510, 538–558, 572–592, 620–640, 644–664, 694–714, 797–817, 840–860, 885–905, 922–942, and 1003–1023; these read LPYL…IFKF, LALL…LAVC, FWHW…WISL, IIVV…TDAG, DVLG…IIAP, IPVG…LNLI, FIWT…VTVV, SITL…YVLV, ITTL…FATL, GLGF…ILLF, and LVIS…QLLL.

The protein belongs to the MscS (TC 1.A.23) family.

The protein resides in the cell membrane. This is an uncharacterized protein from Haemophilus influenzae (strain ATCC 51907 / DSM 11121 / KW20 / Rd).